The primary structure comprises 688 residues: Homoaconitase, mitochondrial (688 aa).

Residues C335, C395, and C398 each coordinate [4Fe-4S] cluster. The interval 468 to 494 is disordered; that stretch reads SIDLPKSSGNTGATSEEPISEDDTSEA.

It belongs to the aconitase/IPM isomerase family. [4Fe-4S] cluster serves as cofactor.

Its subcellular location is the mitochondrion. It carries out the reaction (2R,3S)-homoisocitrate = cis-homoaconitate + H2O. The protein operates within amino-acid biosynthesis; L-lysine biosynthesis via AAA pathway; L-alpha-aminoadipate from 2-oxoglutarate: step 3/5. Its function is as follows. Catalyzes the reversible hydration of cis-homoaconitate to (2R,3S)-homoisocitrate, a step in the alpha-aminoadipate pathway for lysine biosynthesis. This chain is Homoaconitase, mitochondrial (LYS4), found in Candida parapsilosis (Yeast).